A 246-amino-acid polypeptide reads, in one-letter code: Eukaryotic translation initiation factor 6 (246 aa).

Residues S174 and S175 each carry the phosphoserine; by CK1 modification.

The protein belongs to the eIF-6 family. In terms of assembly, monomer. Associates with the 60S ribosomal subunit. Post-translationally, phosphorylation at Ser-174 and Ser-175 promotes nuclear export.

It is found in the cytoplasm. It localises to the nucleus. Its subcellular location is the nucleolus. Binds to the 60S ribosomal subunit and prevents its association with the 40S ribosomal subunit to form the 80S initiation complex in the cytoplasm. Is also involved in ribosome biogenesis. Associates with pre-60S subunits in the nucleus and is involved in its nuclear export. This chain is Eukaryotic translation initiation factor 6, found in Sordaria macrospora (strain ATCC MYA-333 / DSM 997 / K(L3346) / K-hell).